The primary structure comprises 153 residues: Bacteriohemerythrin (153 aa).

H21, H57, E61, H76, H80, H115, and D120 together coordinate Fe cation.

Belongs to the hemerythrin family. Monomer.

Its function is as follows. Oxygen-binding protein. May be involved in a storage mechanism or for delivery to oxygen-requiring enzymes. The oxygen-binding site contains two iron atoms. The protein is Bacteriohemerythrin of Stenotrophomonas maltophilia (strain R551-3).